The following is a 603-amino-acid chain: Leucine-rich repeat-containing protein 40 (603 aa).

The tract at residues 1 to 27 (MAAARRARAGDPRAGFRRAAEEQSPAV) is disordered. LRR repeat units lie at residues 83–104 (DLTKLILASNQLRCLSEDVRLL), 106–127 (ALTVLDVHDNQLTSLPSALGQL), 129–150 (NLQKLDVSHNKLKSIPEELLQL), 152–173 (HLKGLLLQHNELSHLPDGFGQL), 175–196 (SLEELDLSNNHLTDIPKSFALL), 198–219 (NLVRLNLACNQLKDLPADISAM), 221–242 (SLRQLDCTKNYLESVPSELASM), 244–265 (SLEQLYLRKNKLRSLPELPSCK), 266–286 (LLKELHAGENQIEILNAENLK), 290–311 (SLSVLELRDNKIKSVPDEITLL), 313–335 (KLERLDLANNDISRLPYTLGNLS), 336–357 (QLKFLALEGNPLRTIRRDLLQK), 401–422 (TLKLLDYSEKQVAVIPDDVFSA), 427–449 (PVTSVNFSKNQLTAIPPRIVELK), 451–473 (SVCDVNFGFNKISSVSLELCTLH), 474–495 (KLTHLDIRNNVLTSLPEEMEAL), 497–518 (RLQVINLSFNRFKVFPSVLYRM), 520–541 (ALETILLSNNQVGSIDPLQLKK), 544–565 (QLGTLDLQNNDLLQVPPELGNC), and 567–588 (TLRTLLLEGNPFRTPRAAILAK).

The chain is Leucine-rich repeat-containing protein 40 (LRRC40) from Gallus gallus (Chicken).